The primary structure comprises 1128 residues: Major DNA-binding protein (1128 aa).

A zinc finger lies at 453–466; it reads CELCQGTCPASCIH. The interval 1098–1128 is required for nuclear localization; the sequence is QIEEFAPQATLSTLAASRKRKITSILSDIDL.

This sequence belongs to the herpesviridae major DNA-binding protein family. Homooligomers. Forms double-helical filaments necessary for the formation of replication compartments within the host nucleus. Interacts with the origin-binding protein. Interacts with the helicase primase complex; this interaction stimulates primer synthesis activity of the helicase-primase complex. Interacts with the DNA polymerase. Interacts with the alkaline exonuclease; this interaction increases its nuclease processivity.

It localises to the host nucleus. In terms of biological role, single-stranded DNA-binding protein required for DNA replication. Plays several crucial roles in viral infection. Participates in the opening of the viral DNA origin to initiate replication by interacting with the origin-binding protein. May disrupt loops, hairpins and other secondary structures present on ssDNA to reduce and eliminate pausing of viral DNA polymerase at specific sites during elongation. Promotes viral DNA recombination by performing strand-transfer, characterized by the ability to transfer a DNA strand from a linear duplex to a complementary single-stranded DNA circle. Can also catalyze the renaturation of complementary single strands. Additionally, reorganizes the host cell nucleus, leading to the formation of prereplicative sites and replication compartments. This process is driven by the protein which can form double-helical filaments in the absence of DNA. This is Major DNA-binding protein from Saimiri sciureus (Common squirrel monkey).